The chain runs to 298 residues: Inosose dehydratase (298 aa).

This sequence belongs to the IolE/MocC family. It depends on glutathione as a cofactor. Co(2+) serves as cofactor. Requires Mn(2+) as cofactor.

It catalyses the reaction scyllo-inosose = 3D-3,5/4-trihydroxycyclohexane-1,2-dione + H2O. It functions in the pathway polyol metabolism; myo-inositol degradation into acetyl-CoA; acetyl-CoA from myo-inositol: step 2/7. In terms of biological role, catalyzes the dehydration of inosose (2-keto-myo-inositol, 2KMI or 2,4,6/3,5-pentahydroxycyclohexanone) to 3D-(3,5/4)-trihydroxycyclohexane-1,2-dione (D-2,3-diketo-4-deoxy-epi-inositol). The sequence is that of Inosose dehydratase from Clostridium botulinum (strain Eklund 17B / Type B).